The chain runs to 362 residues: Protein indeterminate-domain 16 (362 aa).

The segment at 1–22 is disordered; the sequence is MELTQPIRENGDPQGHQLTDPD. 2 C2H2-type zinc fingers span residues 39 to 61 and 82 to 112; these read YVCEICNQGFQRDQNLQMHRRRH and YVCPEPTCLHHDPCHALGDLVGIKKHFRRKH. The CCHC-type 1; atypical zinc finger occupies 118 to 142; sequence WVCERCSKGYAVQSDYKAHLKTCGS. The Zn(2+) site is built by Cys120, Cys123, His136, Cys140, Cys147, Cys149, His162, and Cys166. Residues 145–168 form a CCHC-type 2; atypical zinc finger; that stretch reads HSCDCGRVFSRVESFIEHQDTCTI. Positions 155-167 are SHR-binding; the sequence is RVESFIEHQDTCT. The interval 247–278 is disordered; the sequence is SAQARHNEKRETSLTKERANEEARKAEETRQE. Basic and acidic residues predominate over residues 251-278; sequence RHNEKRETSLTKERANEEARKAEETRQE. Positions 252–319 form a coiled coil; it reads HNEKRETSLT…VREEAIKRIN (68 aa).

In terms of tissue distribution, highly expressed in leaves, hypocotyls, roots, vasculature of cotyledons, floral organs and in the endodermis and vasculaturenof inflorescence stems.

The protein localises to the nucleus. Its function is as follows. Transcription factor regulating lateral organ morphogenesis and gravitropic responses. Has a redundant role with IDD14 in directing leaf and floral organ morphogenesis. Acts cooperatively with IDD15 to control silique and branche orientation. Involved in the establishment of auxin gradients through the regulation of auxin biosynthesis and transport. The protein is Protein indeterminate-domain 16 of Arabidopsis thaliana (Mouse-ear cress).